We begin with the raw amino-acid sequence, 859 residues long: Envelope glycoprotein (859 aa).

The propeptide occupies 1 to 6; it reads MVSIAF. The Extracellular segment spans residues 7 to 614; that stretch reads YGGIPGGIST…KDLWSHIGNW (608 aa). Residues asparagine 40, asparagine 112, asparagine 141, asparagine 148, asparagine 186, asparagine 214, asparagine 233, asparagine 244, asparagine 313, asparagine 340, asparagine 368, asparagine 399, asparagine 406, and asparagine 411 are each glycosylated (N-linked (GlcNAc...) asparagine; by host). The tract at residues 446–466 is fusion peptide; it reads FGISAIVAAIVAATAIAASAT. Residues asparagine 483 and asparagine 490 are each glycosylated (N-linked (GlcNAc...) asparagine; by host). The tract at residues 498-513 is immunosuppression; the sequence is LIERQIKILYAMILQT. N-linked (GlcNAc...) asparagine; by host glycans are attached at residues asparagine 550 and asparagine 557. 2 coiled-coil regions span residues 576 to 624 and 663 to 699; these read ILTT…SIIK and KKFHHKHASREDTWDQAQHNIHLAGVTGGSGDKYYKQ. A helical membrane pass occupies residues 615 to 635; that stretch reads IPGLGASIIKYIVMFLLIYLL. Residues 636 to 859 lie on the Cytoplasmic side of the membrane; the sequence is LTSSPKILRA…TSHVSMPQYV (224 aa).

In terms of assembly, the mature envelope protein (Env) consists of a trimer of SU-TM heterodimers attached by noncovalent interactions or by a labile interchain disulfide bond. In terms of processing, specific enzymatic cleavages in vivo yield mature proteins. Envelope glycoproteins are synthesized as an inactive precursor that is N-glycosylated and processed likely by host cell furin or by a furin-like protease in the Golgi to yield the mature SU and TM proteins. The cleavage site between SU and TM requires the minimal sequence [KR]-X-[KR]-R.

It is found in the virion membrane. Its subcellular location is the host cell membrane. In terms of biological role, the surface protein (SU) attaches the virus to the host cell by binding to its receptor. This interaction triggers the refolding of the transmembrane protein (TM) and is thought to activate its fusogenic potential by unmasking its fusion peptide. Fusion occurs at the host cell plasma membrane. Its function is as follows. The transmembrane protein (TM) acts as a class I viral fusion protein. Under the current model, the protein has at least 3 conformational states: pre-fusion native state, pre-hairpin intermediate state, and post-fusion hairpin state. During viral and target cell membrane fusion, the coiled coil regions (heptad repeats) assume a trimer-of-hairpins structure, positioning the fusion peptide in close proximity to the C-terminal region of the ectodomain. The formation of this structure appears to drive apposition and subsequent fusion of viral and target cell membranes. Membranes fusion leads to delivery of the nucleocapsid into the cytoplasm. The sequence is that of Envelope glycoprotein (env) from Equus asinus (Donkey).